Reading from the N-terminus, the 243-residue chain is Peptidyl-tRNA hydrolase (243 aa).

TRNA is bound at residue Tyr-14. The Proton acceptor role is filled by His-19. Residues Tyr-64, Asn-66, and Asn-112 each coordinate tRNA. Positions 190-207 (KAEEEKPRKEGKDGEKKP) are enriched in basic and acidic residues. A disordered region spans residues 190 to 243 (KAEEEKPRKEGKDGEKKPAGQSHIRQARSSNQPKLPATGPMAEMLKKMFGNKGE). The segment covering 212–222 (HIRQARSSNQP) has biased composition (polar residues).

This sequence belongs to the PTH family. As to quaternary structure, monomer.

It localises to the cytoplasm. The catalysed reaction is an N-acyl-L-alpha-aminoacyl-tRNA + H2O = an N-acyl-L-amino acid + a tRNA + H(+). Functionally, hydrolyzes ribosome-free peptidyl-tRNAs (with 1 or more amino acids incorporated), which drop off the ribosome during protein synthesis, or as a result of ribosome stalling. In terms of biological role, catalyzes the release of premature peptidyl moieties from peptidyl-tRNA molecules trapped in stalled 50S ribosomal subunits, and thus maintains levels of free tRNAs and 50S ribosomes. The polypeptide is Peptidyl-tRNA hydrolase (Rhizobium etli (strain CIAT 652)).